Reading from the N-terminus, the 1151-residue chain is Cation channel sperm-associated protein subunit gamma 1 (1151 aa).

The signal sequence occupies residues 1–38; it reads MVSRPAMSPVSPVWPRKPNLWAFWVLRLVLLLSLKSWA. The Extracellular portion of the chain corresponds to 39–1063; it reads EDTLQHCTWL…GLPLSSKRSS (1025 aa). Asparagine 356 is a glycosylation site (N-linked (GlcNAc...) asparagine). Residues 1064–1084 traverse the membrane as a helical segment; the sequence is FIVMVSTSFFIALVVFYILFC. Topologically, residues 1085–1151 are cytoplasmic; it reads LVWPHIVKAW…NVQAKRAKVA (67 aa). The span at 1113 to 1123 shows a compositional bias: low complexity; sequence SSSSGGFTLHS. The tract at residues 1113–1151 is disordered; that stretch reads SSSSGGFTLHSHSSEGSFEGPSRPGTKEDNVQAKRAKVA.

It belongs to the CATSPERG family.

The protein resides in the membrane. This is Cation channel sperm-associated protein subunit gamma 1 (Catsperg1) from Mus musculus (Mouse).